The primary structure comprises 342 residues: N-acetyl-gamma-glutamyl-phosphate reductase (342 aa).

The active site involves cysteine 149.

Belongs to the NAGSA dehydrogenase family. Type 1 subfamily.

The protein localises to the cytoplasm. The catalysed reaction is N-acetyl-L-glutamate 5-semialdehyde + phosphate + NADP(+) = N-acetyl-L-glutamyl 5-phosphate + NADPH + H(+). It functions in the pathway amino-acid biosynthesis; L-arginine biosynthesis; N(2)-acetyl-L-ornithine from L-glutamate: step 3/4. Catalyzes the NADPH-dependent reduction of N-acetyl-5-glutamyl phosphate to yield N-acetyl-L-glutamate 5-semialdehyde. This is N-acetyl-gamma-glutamyl-phosphate reductase from Cereibacter sphaeroides (strain ATCC 17025 / ATH 2.4.3) (Rhodobacter sphaeroides).